The primary structure comprises 121 residues: Small ribosomal subunit protein uS13 (121 aa).

Positions 91–121 (HRMSLPVRGQRTRTNARTRRGSRKTVAGRKK) are disordered. Positions 100–121 (QRTRTNARTRRGSRKTVAGRKK) are enriched in basic residues.

Belongs to the universal ribosomal protein uS13 family. Part of the 30S ribosomal subunit. Forms a loose heterodimer with protein S19. Forms two bridges to the 50S subunit in the 70S ribosome.

Located at the top of the head of the 30S subunit, it contacts several helices of the 16S rRNA. In the 70S ribosome it contacts the 23S rRNA (bridge B1a) and protein L5 of the 50S subunit (bridge B1b), connecting the 2 subunits; these bridges are implicated in subunit movement. Contacts the tRNAs in the A and P-sites. This is Small ribosomal subunit protein uS13 from Prochlorococcus marinus (strain SARG / CCMP1375 / SS120).